We begin with the raw amino-acid sequence, 1053 residues long: MKFRDYLKDNKVSHWRDKYIDYEYLKNLIDNEYINAEILNSAIIDLPLSPEEQNNINKNNNNNNNNNNNNNNNNNNNNNINNNNNNNNTLKDGEQTNSNNISIPNQMAPQESSGEDEDDENENGNGVVGDEDGGDDDEIEMDELVIDDNGEIINITATAGSRVKVKKGINKGVKRLKKIAKNTNNRLSRMVSRSPKNKGLGSSSEIEGDEFQLDGGGISSQIEMVASNNITGATVFVPQETFQDGFIDQVNKVDIFFVDRYRKTKFKCVDLVGMIPFLSDNEQLRTIRNIDYVKQGFHDNYHYLESLESYKNLNLDGFYKILDKYEKINPRIAKECRKYLENTRLTSTNSPVRELSRRIKQIYARYFTGNDIKLANNQIRTNKQVNQFQNYIIGFLIGASAILIAQVIFKFYYYFPDVADSPKNSPMAWLLFRISSLPIILGTLFALMTKLWEKAGINYVFIFELKPDIKRSSSRYLMYGMIFVTMWLVVFNVYVDSISNKTGSPETSRYLLLIPLLFILGSIFFLILPFKVLAHRTRFWVLHKMSKVVQAPFVPVRFPDFFMSVQLLCLGEFLFNMQQIVCMFKFNDPLYSPSGVCFKHKAVIFPILSVLPFYWRVMQCVRRFWETGQFFPHITSAIRSTFSIVTNILLWVANNYGNKEWSWIKILWFIINVVGTVYKLYADFTVDWGLFLNYKTNKQWPLREKMVFKRKWVYYVAMSFDTFFRFVWLIVFSIRQGTSYKLDHPLFLFWFSLSEIAWAAQFIFFRVESEHVQCADTYSHFKDIPLPFSQDYKNYMEEKKSRYDEKKPHHHHHHDNNNNETKDGSGGTHHRRNLSNGHHPYDDDDDDESIDSDADSKDLNLESNSEFVDDEGYNQRKNSIISSIKKIASTQELNSMNRISSHPDLYSTMQRFAGHVPDSNSSMPRMYSHPDFNHPIPRVLTSHVEVNPSTLRTVPQHRLNNIPNQRIISHADINPQHLRVGSPRVEFNSTVQQRSPHGEIQSSMIRNHSRADLNSSMQRIQSHPELNSSNRNQVDPNSPMNRLITRADLNKSR.

An SPX domain is found at 1–339 (MKFRDYLKDN…PRIAKECRKY (339 aa)). Residues 54 to 88 (NNINKNNNNNNNNNNNNNNNNNNNNNINNNNNNNN) are compositionally biased toward low complexity. Positions 54–137 (NNINKNNNNN…VGDEDGGDDD (84 aa)) are disordered. Polar residues predominate over residues 95-112 (QTNSNNISIPNQMAPQES). A compositionally biased stretch (acidic residues) spans 113–122 (SGEDEDDENE). 10 helical membrane-spanning segments follow: residues 391 to 411 (YIIG…IFKF), 427 to 447 (MAWL…LFAL), 476 to 496 (YLMY…VYVD), 510 to 530 (YLLL…ILPF), 561 to 581 (FFMS…QQIV), 595 to 615 (GVCF…PFYW), 630 to 652 (FFPH…LLWV), 666 to 686 (ILWF…DFTV), 712 to 732 (WVYY…LIVF), and 745 to 765 (PLFL…FIFF). The EXS domain maps to 596-798 (VCFKHKAVIF…SQDYKNYMEE (203 aa)). Disordered stretches follow at residues 799 to 871 (KKSR…VDDE) and 1023 to 1053 (HPEL…NKSR). The segment covering 842-853 (DDDDDDESIDSD) has biased composition (acidic residues). The span at 1023–1040 (HPELNSSNRNQVDPNSPM) shows a compositional bias: polar residues.

It belongs to the SYG1 (TC 2.A.94) family.

The protein localises to the membrane. The sequence is that of SPX and EXS domain-containing protein 2 from Dictyostelium discoideum (Social amoeba).